The chain runs to 248 residues: 2,3-bisphosphoglycerate-dependent phosphoglycerate mutase (248 aa).

Substrate contacts are provided by residues 8–15 (RHGESTWN), 21–22 (TG), Arg-60, 87–90 (ERHY), Lys-98, 114–115 (RR), and 183–184 (GN). His-9 functions as the Tele-phosphohistidine intermediate in the catalytic mechanism. Catalysis depends on Glu-87, which acts as the Proton donor/acceptor.

It belongs to the phosphoglycerate mutase family. BPG-dependent PGAM subfamily. As to quaternary structure, homodimer.

It catalyses the reaction (2R)-2-phosphoglycerate = (2R)-3-phosphoglycerate. The protein operates within carbohydrate degradation; glycolysis; pyruvate from D-glyceraldehyde 3-phosphate: step 3/5. In terms of biological role, catalyzes the interconversion of 2-phosphoglycerate and 3-phosphoglycerate. The polypeptide is 2,3-bisphosphoglycerate-dependent phosphoglycerate mutase (Burkholderia orbicola (strain MC0-3)).